A 327-amino-acid polypeptide reads, in one-letter code: Complex I intermediate-associated protein 30, mitochondrial (327 aa).

A mitochondrion-targeting transit peptide spans 1 to 24; the sequence is MALVHKLLRGTYFLRKFXKPTSAL. The segment at 42 to 63 is disordered; it reads PVASPGKASSQRKTEGDLQGDH. Residues 53 to 63 show a composition bias toward basic and acidic residues; that stretch reads RKTEGDLQGDH. Ser318 bears the Phosphoserine mark.

It belongs to the CIA30 family. As to quaternary structure, part of the mitochondrial complex I assembly/MCIA complex that comprises at least the core subunits TMEM126B, NDUFAF1, ECSIT and ACAD9 and complement subunits such as COA1 and TMEM186. Interacts with ECSIT. Interacts with ACAD9. At early stages of complex I assembly, it is found in intermediate subcomplexes that contain different subunits including NDUFB6, NDUFA6, NDUFA9, NDUFS3, NDUFS7, ND1, ND2 and ND3. Interacts with TMEM70 and TMEM242.

The protein resides in the mitochondrion. Its subcellular location is the mitochondrion matrix. Functionally, as part of the MCIA complex, involved in the assembly of the mitochondrial complex I. The chain is Complex I intermediate-associated protein 30, mitochondrial from Pan troglodytes (Chimpanzee).